Consider the following 267-residue polypeptide: Diphthine synthase (267 aa).

Residues Leu9, Asp87, Ile90, 115–116, Leu166, Leu205, and His230 each bind S-adenosyl-L-methionine; that span reads SI.

Belongs to the diphthine synthase family. As to quaternary structure, homodimer.

It carries out the reaction 2-[(3S)-amino-3-carboxypropyl]-L-histidyl-[translation elongation factor 2] + 3 S-adenosyl-L-methionine = diphthine-[translation elongation factor 2] + 3 S-adenosyl-L-homocysteine + 3 H(+). It participates in protein modification; peptidyl-diphthamide biosynthesis. S-adenosyl-L-methionine-dependent methyltransferase that catalyzes the trimethylation of the amino group of the modified target histidine residue in translation elongation factor 2 (EF-2), to form an intermediate called diphthine. The three successive methylation reactions represent the second step of diphthamide biosynthesis. The polypeptide is Diphthine synthase (Staphylothermus marinus (strain ATCC 43588 / DSM 3639 / JCM 9404 / F1)).